Reading from the N-terminus, the 199-residue chain is Recombination protein RecR (199 aa).

A C4-type zinc finger spans residues 57-72 (CQSCRTYTEESLCPIC). In terms of domain architecture, Toprim spans 81-176 (STICVVETPA…VISRIAHGVP (96 aa)).

It belongs to the RecR family.

Its function is as follows. May play a role in DNA repair. It seems to be involved in an RecBC-independent recombinational process of DNA repair. It may act with RecF and RecO. The protein is Recombination protein RecR of Shewanella sp. (strain ANA-3).